The chain runs to 172 residues: Ribosome maturation factor RimM (172 aa).

In terms of domain architecture, PRC barrel spans 95 to 168 (DDGEFYYHEI…RVDVEILEGL (74 aa)).

The protein belongs to the RimM family. As to quaternary structure, binds ribosomal protein uS19.

Its subcellular location is the cytoplasm. Its function is as follows. An accessory protein needed during the final step in the assembly of 30S ribosomal subunit, possibly for assembly of the head region. Essential for efficient processing of 16S rRNA. May be needed both before and after RbfA during the maturation of 16S rRNA. It has affinity for free ribosomal 30S subunits but not for 70S ribosomes. This chain is Ribosome maturation factor RimM, found in Streptococcus pneumoniae (strain P1031).